The sequence spans 796 residues: DNA damage-responsive transcriptional repressor RPH1 (796 aa).

The 42-residue stretch at 14 to 55 folds into the JmjN domain; it reads VPVFKPTYEQFEDFYAYCKAINKYGMKSGVVKVIPPKEWKDK. Positions 193–355 constitute a JmjC domain; that stretch reads PEGLNVWNVA…IGKKAGKCHC (163 aa). Phosphothreonine is present on Thr-399. Phosphoserine is present on residues Ser-430, Ser-459, Ser-557, Ser-561, Ser-575, and Ser-584. The short motif at 455–471 is the Bipartite nuclear localization signal element; it reads KRISSFQEQPLNKLLKR. The interval 599-692 is disordered; the sequence is RQQHSQQHSF…DKEQGSSPLN (94 aa). A compositionally biased stretch (polar residues) spans 601 to 621; that stretch reads QHSQQHSFSTPSTVSNLSTSV. Over residues 629-640 the composition is skewed to basic and acidic residues; it reads NDIKTPHPERPN. Ser-652 carries the phosphoserine modification. A compositionally biased stretch (polar residues) spans 654-669; it reads VETSKSNLILSKVAST. Basic and acidic residues predominate over residues 670–686; it reads RQEDSFTSRNDDLDKEQ. Phosphoserine is present on Ser-689. The C2H2-type 1 zinc finger occupies 709–732; sequence YICKECQRKFSSGHHLTRHKKSVH. Residues 738-763 form a C2H2-type 2; atypical zinc finger; it reads HSCPKCGKRFKRRDHVLQHLNKKIPC. The segment at 774–796 is disordered; it reads IMNPTVQPQDGKAAINQQSTPLN.

RAD53-dependent phosphorylated in response to DNA damage.

It localises to the nucleus. Transcriptional repressor of photolyase PHR1. Recognizes and binds the sequence AG(4) in the upstream repressing sequence of PHR1. Derepresses PHR1 transcription when phosphorylated. This is DNA damage-responsive transcriptional repressor RPH1 (RPH1) from Saccharomyces cerevisiae (strain ATCC 204508 / S288c) (Baker's yeast).